We begin with the raw amino-acid sequence, 538 residues long: Lipid scramblase CLPTM1L (538 aa).

At 1–10 (MWSGRSSFTS) the chain is on the cytoplasmic side. A helical transmembrane segment spans residues 11-31 (LVVGVFVVYVVHTCWVMYGIV). The Extracellular segment spans residues 32–284 (YTRPCSGDAN…VKGIFVDTNL (253 aa)). Residues N91 and N101 are each glycosylated (N-linked (GlcNAc...) asparagine). A helical transmembrane segment spans residues 285 to 305 (YFLALTFFVAAFHLLFDFLAF). At 306–324 (KNDISFWKKKKSMIGMSTK) the chain is on the cytoplasmic side. The chain crosses the membrane as a helical span at residues 325–342 (AVLWRCFSTVVIFLFLLD). At 343 to 346 (EQTS) the chain is on the extracellular side. A helical membrane pass occupies residues 347-364 (LLVLVPAGVGAAIELWKV). Topologically, residues 365–402 (KKALKMTILWRGLMPEFELGTYSESERKTEEYDTQAMK) are cytoplasmic. Residues 403–423 (YLSYLLYPLCVGGAVYSLLNI) traverse the membrane as a helical segment. The Extracellular segment spans residues 424–428 (KYKSW). Residues 429–449 (YSWLINSFVNGVYAFGFLFML) traverse the membrane as a helical segment. Topologically, residues 450–538 (PQLFVNYKLK…EKAARAPHTD (89 aa)) are cytoplasmic.

The protein belongs to the CLPTM1 family.

It localises to the endoplasmic reticulum membrane. The catalysed reaction is a 6-(alpha-D-glucosaminyl)-1-(1,2-diacyl-sn-glycero-3-phospho)-1D-myo-inositol(in) = a 6-(alpha-D-glucosaminyl)-1-(1,2-diacyl-sn-glycero-3-phospho)-1D-myo-inositol(out). The enzyme catalyses 6-(alpha-D-glucosaminyl)-(1-octadecanoyl,2-(9Z)-octadecenoyl-sn-glycero-3-phospho)-1D-myo-inositol(in) = 6-(alpha-D-glucosaminyl)-(1-octadecanoyl,2-(9Z)-octadecenoyl-sn-glycero-3-phospho)-1D-myo-inositol(out). It catalyses the reaction a 1,2-diacyl-sn-glycero-3-phospho-(1D-myo-inositol)(in) = a 1,2-diacyl-sn-glycero-3-phospho-(1D-myo-inositol)(out). It carries out the reaction a 1,2-diacyl-sn-glycero-3-phosphocholine(in) = a 1,2-diacyl-sn-glycero-3-phosphocholine(out). The catalysed reaction is a 1,2-diacyl-sn-glycero-3-phosphoethanolamine(in) = a 1,2-diacyl-sn-glycero-3-phosphoethanolamine(out). Its function is as follows. Scramblase that mediates the translocation of glucosaminylphosphatidylinositol (alpha-D-GlcN-(1-6)-(1,2-diacyl-sn-glycero-3-phospho)-1D-myo-inositol, GlcN-PI) across the endoplasmic reticulum (ER) membrane, from the cytosolic leaflet to the luminal leaflet of the ER membrane, where it participates in the biosynthesis of glycosylphosphatidylinositol (GPI). GPI is a lipid glycoconjugate involved in post-translational modification of proteins. Can also translocate 1,2-diacyl-sn-glycero-3-phospho-(1D-myo-inositol) (phosphatidylinositol or PI), as well as several other phospholipids (1,2-diacyl-sn-glycero-3-phosphocholine, 1,2-diacyl-sn-glycero-3-phosphoethanolamine), and N-acetylglucosaminylphosphatidylinositol (GlcNAc-PI) in vitro. The polypeptide is Lipid scramblase CLPTM1L (CLPTM1L) (Pongo abelii (Sumatran orangutan)).